A 196-amino-acid chain; its full sequence is S-norcoclaurine synthase 2 (196 aa).

A signal peptide spans 1–19; sequence MRMEVVLVVFLMFIGTINC. A dopamine-binding site is contributed by 104-106; it reads YRE. K118 functions as the Proton donor in the catalytic mechanism. D137 lines the (4-hydroxyphenyl)acetaldehyde pocket.

The protein belongs to the BetVI family.

It catalyses the reaction (4-hydroxyphenyl)acetaldehyde + dopamine = (S)-norcoclaurine + H2O. Not inhibited by O-phenanthroline or EDTA. Involved in the biosynthesis of the common precursor of all benzylisoquinoline alkaloids such as morphine, sanguinarine, codeine or berberine. Condenses dopamine and pyruvic acid or 4-hydroxyphenylpyruvate. This is S-norcoclaurine synthase 2 (PR10A) from Coptis japonica (Japanese goldthread).